A 329-amino-acid chain; its full sequence is Tyrosine--tRNA ligase (329 aa).

5 residues coordinate L-tyrosine: Tyr-31, Tyr-157, Gln-161, Asp-164, and Gln-179. The short motif at 220–224 (KMSKS) is the 'KMSKS' region element. Position 223 (Lys-223) interacts with ATP.

It belongs to the class-I aminoacyl-tRNA synthetase family. TyrS type 4 subfamily. Homodimer.

Its subcellular location is the cytoplasm. The catalysed reaction is tRNA(Tyr) + L-tyrosine + ATP = L-tyrosyl-tRNA(Tyr) + AMP + diphosphate + H(+). Catalyzes the attachment of tyrosine to tRNA(Tyr) in a two-step reaction: tyrosine is first activated by ATP to form Tyr-AMP and then transferred to the acceptor end of tRNA(Tyr). In Picrophilus torridus (strain ATCC 700027 / DSM 9790 / JCM 10055 / NBRC 100828 / KAW 2/3), this protein is Tyrosine--tRNA ligase.